The following is a 144-amino-acid chain: 3-hydroxyacyl-[acyl-carrier-protein] dehydratase FabZ (144 aa).

Residue His-48 is part of the active site.

Belongs to the thioester dehydratase family. FabZ subfamily.

It is found in the cytoplasm. It carries out the reaction a (3R)-hydroxyacyl-[ACP] = a (2E)-enoyl-[ACP] + H2O. Involved in unsaturated fatty acids biosynthesis. Catalyzes the dehydration of short chain beta-hydroxyacyl-ACPs and long chain saturated and unsaturated beta-hydroxyacyl-ACPs. This Bacillus cytotoxicus (strain DSM 22905 / CIP 110041 / 391-98 / NVH 391-98) protein is 3-hydroxyacyl-[acyl-carrier-protein] dehydratase FabZ.